A 197-amino-acid chain; its full sequence is Imidazoleglycerol-phosphate dehydratase (197 aa).

The protein belongs to the imidazoleglycerol-phosphate dehydratase family.

The protein resides in the cytoplasm. It catalyses the reaction D-erythro-1-(imidazol-4-yl)glycerol 3-phosphate = 3-(imidazol-4-yl)-2-oxopropyl phosphate + H2O. It participates in amino-acid biosynthesis; L-histidine biosynthesis; L-histidine from 5-phospho-alpha-D-ribose 1-diphosphate: step 6/9. This Novosphingobium aromaticivorans (strain ATCC 700278 / DSM 12444 / CCUG 56034 / CIP 105152 / NBRC 16084 / F199) protein is Imidazoleglycerol-phosphate dehydratase.